A 348-amino-acid chain; its full sequence is Holliday junction branch migration complex subunit RuvB (348 aa).

The large ATPase domain (RuvB-L) stretch occupies residues 1-184 (MTLNRDMVSP…FGIVQRLEFY (184 aa)). The ATP site is built by L23, R24, G65, K68, T69, T70, R174, Y184, and R221. T69 is a binding site for Mg(2+). Residues 185–255 (AVDHLVLIVE…VAQKALDLLD (71 aa)) form a small ATPAse domain (RuvB-S) region. Residues 258-348 (SHGFDTMDRK…QEVSDLFPNE (91 aa)) form a head domain (RuvB-H) region. DNA contacts are provided by R294, R313, and R318.

Belongs to the RuvB family. Homohexamer. Forms an RuvA(8)-RuvB(12)-Holliday junction (HJ) complex. HJ DNA is sandwiched between 2 RuvA tetramers; dsDNA enters through RuvA and exits via RuvB. An RuvB hexamer assembles on each DNA strand where it exits the tetramer. Each RuvB hexamer is contacted by two RuvA subunits (via domain III) on 2 adjacent RuvB subunits; this complex drives branch migration. In the full resolvosome a probable DNA-RuvA(4)-RuvB(12)-RuvC(2) complex forms which resolves the HJ.

It localises to the cytoplasm. It carries out the reaction ATP + H2O = ADP + phosphate + H(+). Its function is as follows. The RuvA-RuvB-RuvC complex processes Holliday junction (HJ) DNA during genetic recombination and DNA repair, while the RuvA-RuvB complex plays an important role in the rescue of blocked DNA replication forks via replication fork reversal (RFR). RuvA specifically binds to HJ cruciform DNA, conferring on it an open structure. The RuvB hexamer acts as an ATP-dependent pump, pulling dsDNA into and through the RuvAB complex. RuvB forms 2 homohexamers on either side of HJ DNA bound by 1 or 2 RuvA tetramers; 4 subunits per hexamer contact DNA at a time. Coordinated motions by a converter formed by DNA-disengaged RuvB subunits stimulates ATP hydrolysis and nucleotide exchange. Immobilization of the converter enables RuvB to convert the ATP-contained energy into a lever motion, pulling 2 nucleotides of DNA out of the RuvA tetramer per ATP hydrolyzed, thus driving DNA branch migration. The RuvB motors rotate together with the DNA substrate, which together with the progressing nucleotide cycle form the mechanistic basis for DNA recombination by continuous HJ branch migration. Branch migration allows RuvC to scan DNA until it finds its consensus sequence, where it cleaves and resolves cruciform DNA. The sequence is that of Holliday junction branch migration complex subunit RuvB from Nitrosococcus oceani (strain ATCC 19707 / BCRC 17464 / JCM 30415 / NCIMB 11848 / C-107).